The sequence spans 275 residues: Arylalkylamine N-acetyltransferase 1 (275 aa).

Acetyl-CoA contacts are provided by residues 181–183 (LSV) and 189–193 (GLGIA). Residues 181–254 (LSVDTNYRGL…GEVVFKPAAP (74 aa)) enclose the N-acetyltransferase domain.

Belongs to the acetyltransferase family. AANAT subfamily. In the adult, expressed in the midgut portion of the thoracic segments and the frontal half of the abdomen (at protein level). Expressed in the epithelial cell layer facing the lumen of the gut (at protein level). In the brain, expressed in a sub-populations of neurons and astrocytes, and in a set of distinct stripes in the optic lobes (at protein level). Expressed mainly in serotonergic neurons but also in subsets of glutamatergic, GABAergic and cholinergic neurons (at protein level).

It localises to the cytoplasm. The protein resides in the nucleus. It carries out the reaction a 2-arylethylamine + acetyl-CoA = an N-acetyl-2-arylethylamine + CoA + H(+). It catalyses the reaction serotonin + acetyl-CoA = N-acetylserotonin + CoA + H(+). The catalysed reaction is dopamine + acetyl-CoA = N-acetyldopamine + CoA + H(+). The enzyme catalyses tyramine + acetyl-CoA = N-acetyltyramine + CoA + H(+). It carries out the reaction octopamine + acetyl-CoA = N-acetyloctopamine + CoA + H(+). It catalyses the reaction 5-methoxytryptamine + acetyl-CoA = melatonin + CoA + H(+). The catalysed reaction is 2-phenylethylamine + acetyl-CoA = N-(2-phenylethyl)acetamide + CoA + H(+). The enzyme catalyses noradrenaline + acetyl-CoA = N-acetylnoradrenaline + CoA + H(+). It carries out the reaction tyramine + butanoyl-CoA = N-butanoyltyramine + CoA + H(+). It catalyses the reaction tyramine + hexanoyl-CoA = N-hexanoyltyramine + CoA + H(+). The catalysed reaction is tryptamine + acetyl-CoA = N-acetyltryptamine + CoA + H(+). The enzyme catalyses dopamine + hexadecanoyl-CoA = N-hexadecanoyl-dopamine + CoA + H(+). It carries out the reaction dopamine + (9Z)-octadecenoyl-CoA = N-(9Z-octadecanoyl)-dopamine + CoA + H(+). It catalyses the reaction serotonin + hexadecanoyl-CoA = N-hexadecanoyl-serotonin + CoA + H(+). The catalysed reaction is serotonin + (9Z)-octadecenoyl-CoA = N-(9Z-octadecenoyl)-serotonin + CoA + H(+). The enzyme catalyses serotonin + octadecanoyl-CoA = N-octadecanoyl-serotonin + CoA + H(+). It carries out the reaction serotonin + (5Z,8Z,11Z,14Z)-eicosatetraenoyl-CoA = N-[(5Z,8Z,11Z,14Z)-eicosatetraenoyl]-serotonin + CoA + H(+). It participates in aromatic compound metabolism; melatonin biosynthesis; melatonin from serotonin: step 1/2. With respect to regulation, inhibited by long-chain acyl-CoA thioesters, oleoyl-CoA (an analog of acetyl-CoA) and tyrosol (an analog of tyramine). Functionally, catalyzes N-acetylation of tryptamine, tyramine, dopamine, serotonin and octopamine. In astrocytes, regulates sleep homeostasis by limiting the accumulation of serotonin and dopamine in the brain upon sleep deprivation. Is not essential for sclerotization. This is Arylalkylamine N-acetyltransferase 1 from Drosophila melanogaster (Fruit fly).